The sequence spans 284 residues: GPN-loop GTPase 3 (284 aa).

13-18 (GSGKST) contacts GTP. Positions 72 to 74 (GPN) match the Gly-Pro-Asn (GPN)-loop; involved in dimer interface motif. 174–177 (TKMD) is a binding site for GTP. The disordered stretch occupies residues 261 to 284 (KEPKEHEEESSSMFDEYFQERQNE).

The protein belongs to the GPN-loop GTPase family. In terms of assembly, heterodimer with GPN1. Binds to RNA polymerase II (RNAPII). Interacts directly with subunits RPB4 and RPB7 and the CTD of RPB1.

Small GTPase required for proper localization of RNA polymerase II (RNAPII). May act at an RNAP assembly step prior to nuclear import. The polypeptide is GPN-loop GTPase 3 (Rattus norvegicus (Rat)).